The following is a 272-amino-acid chain: Insulin-like growth factor-binding protein 5 (272 aa).

The signal sequence occupies residues 1–20 (MVLLTAVLLLLAAYAGPAQS). One can recognise an IGFBP N-terminal domain in the interval 23–103 (SFVHCEPCDE…LHGRGVCLNE (81 aa)). 6 disulfide bridges follow: cysteine 27–cysteine 53, cysteine 30–cysteine 55, cysteine 38–cysteine 56, cysteine 45–cysteine 59, cysteine 67–cysteine 80, and cysteine 74–cysteine 100. Positions 111–122 (KIERDSREHEEP) are enriched in basic and acidic residues. The tract at residues 111–130 (KIERDSREHEEPTTSEMAEE) is disordered. The residue at position 116 (serine 116) is a Phosphoserine; by FAM20C. O-linked (HexNAc...) threonine glycosylation occurs at threonine 172. The 75-residue stretch at 189–263 (QGPCRRHMEA…MEYVDGDFQC (75 aa)) folds into the Thyroglobulin type-1 domain. 3 disulfides stabilise this stretch: cysteine 192–cysteine 219, cysteine 230–cysteine 241, and cysteine 243–cysteine 263.

Interacts with IGF1; this interaction enhances the growth stimulatory effects of IGF1 on fibroblasts. Interacts with CAV1; this interaction allows trafficking of IGFBP5 from the plasma membrane to the nucleus. Interacts with NCL; this interaction is necessary for IGFBP5 localization to the nucleus. Cleaved by C1S in extracellular space. Osteosarcoma, and at lower levels in liver, kidney and brain.

It localises to the secreted. The protein resides in the cytoplasm. The protein localises to the nucleus. Functionally, multifunctional protein that plays a critical role in regulating the availability of IGFs to their receptors and thereby regulates IGF-mediated cellular processes including proliferation, differentiation, and apoptosis in a cell-type specific manner. Increases the cell proliferation of osteoblasts, intestinal smooth muscle cells and neuroblastoma cells. Enhances adhesion and survival of epithelial cells but decreases adhesion of mesenchymal cells. Once secreted, acts as a major mediator of mTORC1-dependent feedback inhibition of IGF1 signaling. Also plays a role in the induction of extracellular matrix (ECM) production and deposition independently of its nuclear translocation and binding to IGFs. Acts itself as a growth factor that can act independently of IGFs to regulate bone formation. Acts as a ligand for the ROR1 receptor which triggers formation of ROR1/HER2 heterodimer to enhance CREB oncogenic signaling. The sequence is that of Insulin-like growth factor-binding protein 5 (IGFBP5) from Homo sapiens (Human).